Reading from the N-terminus, the 746-residue chain is Ferric enterobactin receptor (746 aa).

An N-terminal signal peptide occupies residues 1 to 25 (MSSRALPAVPFLLLSSCLLANAVHA). The short motif at 39 to 44 (QTVVAT) is the TonB box element. A TBDR plug domain is found at 47–174 (EETKQAPGVS…AGGVVNIITK (128 aa)). Disordered regions lie at residues 82–102 (VNLT…IDIR), 235–254 (GHES…GREG), and 397–424 (QKLD…KNRS). A compositionally biased stretch (polar residues) spans 84–98 (LTGNSSSGQRGNNRQ). Residues 179 to 746 (ETHGNLSVYS…TFYTSLTASF (568 aa)) enclose the TBDR beta-barrel domain. A compositionally biased stretch (polar residues) spans 402–411 (PSSNTQNTEE). The TonB C-terminal box motif lies at 729-746 (ATYNEPGRTFYTSLTASF).

The protein belongs to the TonB-dependent receptor family.

The protein localises to the cell outer membrane. Its function is as follows. Specific receptor for the siderophore ferric enterobactin. The sequence is that of Ferric enterobactin receptor (pfeA) from Pseudomonas aeruginosa (strain ATCC 15692 / DSM 22644 / CIP 104116 / JCM 14847 / LMG 12228 / 1C / PRS 101 / PAO1).